The chain runs to 698 residues: eEF1A lysine and N-terminal methyltransferase (698 aa).

Met-1 carries the N-acetylmethionine modification. At Ser-267 the chain carries Phosphoserine. The disordered stretch occupies residues 431-461 (KDTSHRAQKKRKKDRKKQRPADTSEDFPPAP). The segment covering 436–448 (RAQKKRKKDRKKQ) has biased composition (basic residues).

Belongs to the methyltransferase superfamily. As to quaternary structure, forms a tripartite complex containing GAB1, METTL13 and SPRY2. Within the complex interacts with GAB1 and SPRY2. Expressed in the inner ear (at protein level). Expression is detected in the cochlear duct, spiral limbus region, efferent and afferent nerves, and in spiral ganglion neurons (at protein level).

The protein localises to the cytoplasm. It localises to the nucleus. It is found in the mitochondrion. It carries out the reaction L-lysyl-[protein] + S-adenosyl-L-methionine = N(6)-methyl-L-lysyl-[protein] + S-adenosyl-L-homocysteine + H(+). It catalyses the reaction N(6)-methyl-L-lysyl-[protein] + S-adenosyl-L-methionine = N(6),N(6)-dimethyl-L-lysyl-[protein] + S-adenosyl-L-homocysteine + H(+). The catalysed reaction is N-terminal glycyl-L-lysyl-L-glutamyl-[protein] + 3 S-adenosyl-L-methionine = N-terminal N,N,N-trimethyl-glycyl-L-lysyl-L-glutamyl-[protein] + 3 S-adenosyl-L-homocysteine + 3 H(+). Dual methyltransferase that catalyzes methylation of elongation factor 1-alpha (EEF1A1 and EEF1A2) at two different positions, and is therefore involved in the regulation of mRNA translation. Via its C-terminus, methylates EEF1A1 and EEF1A2 at the N-terminal residue 'Gly-2'. Via its N-terminus dimethylates EEF1A1 and EEF1A2 at residue 'Lys-55'. Has no activity towards core histones H2A, H2B, H3 and H4. The protein is eEF1A lysine and N-terminal methyltransferase of Mus musculus (Mouse).